We begin with the raw amino-acid sequence, 341 residues long: Pectate trisaccharide-lyase (341 aa).

Residues 1 to 27 (MKKLISIIFIFVLGVVGSLTAAVSAEA) form the signal peptide. Residues 28 to 39 (ASALNSGKVNPL) constitute a propeptide that is removed on maturation. PbH1 repeat units lie at residues 131 to 156 (ANNI…GIEG) and 158 to 186 (SKNI…FDVK). Ca(2+)-binding residues include aspartate 150, aspartate 180, and aspartate 184. Residue arginine 233 is part of the active site. 2 PbH1 repeats span residues 262–283 (GARI…VSWY) and 287–322 (PGYW…SLDN).

Belongs to the polysaccharide lyase 1 family. Ca(2+) is required as a cofactor.

It localises to the secreted. It carries out the reaction eliminative cleavage of unsaturated trigalacturonate as the major product from the reducing end of polygalacturonic acid/pectate.. Functionally, cleaves unsaturated oligo-galacturonides from pectin. The major product is trigalacturonate; digalacturonate and tetragalacturonate are also produced. Activity on methylated pectins decreases with an increasing degree of methylation. The protein is Pectate trisaccharide-lyase of Bacillus licheniformis (strain ATCC 14580 / DSM 13 / JCM 2505 / CCUG 7422 / NBRC 12200 / NCIMB 9375 / NCTC 10341 / NRRL NRS-1264 / Gibson 46).